A 290-amino-acid chain; its full sequence is Pyridoxal kinase PdxY (290 aa).

Residues Ser12 and 47–48 contribute to the substrate site; that span reads TQ. Residues Asp114, Glu151, Lys184, and 211 to 214 each bind ATP; that span reads RPLL. Asp225 is a substrate binding site.

This sequence belongs to the pyridoxine kinase family. PdxY subfamily. As to quaternary structure, homodimer. Mg(2+) is required as a cofactor.

It carries out the reaction pyridoxal + ATP = pyridoxal 5'-phosphate + ADP + H(+). Its pathway is cofactor metabolism; pyridoxal 5'-phosphate salvage; pyridoxal 5'-phosphate from pyridoxal: step 1/1. Pyridoxal kinase involved in the salvage pathway of pyridoxal 5'-phosphate (PLP). Catalyzes the phosphorylation of pyridoxal to PLP. This chain is Pyridoxal kinase PdxY, found in Pseudomonas putida (strain W619).